The sequence spans 168 residues: Large ribosomal subunit protein uL10 (168 aa).

It belongs to the universal ribosomal protein uL10 family. Part of the ribosomal stalk of the 50S ribosomal subunit. The N-terminus interacts with L11 and the large rRNA to form the base of the stalk. The C-terminus forms an elongated spine to which L12 dimers bind in a sequential fashion forming a multimeric L10(L12)X complex.

Its function is as follows. Forms part of the ribosomal stalk, playing a central role in the interaction of the ribosome with GTP-bound translation factors. In Photorhabdus laumondii subsp. laumondii (strain DSM 15139 / CIP 105565 / TT01) (Photorhabdus luminescens subsp. laumondii), this protein is Large ribosomal subunit protein uL10.